Consider the following 249-residue polypeptide: Small ribosomal subunit protein uS2 (249 aa).

It belongs to the universal ribosomal protein uS2 family.

This Polynucleobacter asymbioticus (strain DSM 18221 / CIP 109841 / QLW-P1DMWA-1) (Polynucleobacter necessarius subsp. asymbioticus) protein is Small ribosomal subunit protein uS2.